A 258-amino-acid chain; its full sequence is MVLIRVLANLLILQLSYAQKSSELVVGGDECNINEHHSLVAIFNSTGFFCSGTLINQEWVVTAAHCDSKNFKMKFGAHSKKLLNEDEQIRNPKEKFICPNKKSNEILDKDIMLIKLDSPVSNSAHIAPLSLPSSPPSVGSVCRIMGWGSTTPIEVTYPDVPYCANINLLDDAECKPGYPELLPEYRTLCAGIVQGGKDTCGGDSGGPLICNEKLHGIVSYGGHPCGQSHKPGIYTNVFDYNDWIQSIIAGNTDATCLS.

An N-terminal signal peptide occupies residues Met1–Ala18. A propeptide spanning residues Gln19 to Leu24 is cleaved from the precursor. Positions Val25–Ala249 constitute a Peptidase S1 domain. 6 disulfide bridges follow: Cys31–Cys163, Cys50–Cys66, Cys98–Cys256, Cys142–Cys210, Cys174–Cys189, and Cys200–Cys225. The N-linked (GlcNAc...) asparagine glycan is linked to Asn44. Active-site charge relay system residues include His65 and Asp110. The active-site Charge relay system is the Ser204.

This sequence belongs to the peptidase S1 family. Snake venom subfamily. As to quaternary structure, monomer. Expressed by the venom gland.

Its subcellular location is the secreted. The recombinant protein has fibrinogenolytic activity against the Aalpha chain (FGA) of fibrinogen. Activates plasminogen (PLG) (is 4-fold less active than urokinase). Has weak thrombin-like enzyme activity. Has enzymatic activity against a trypsin-like substrate (S-3013) and shows a weaker activity on an activated protein C substrate (S-3125). This Trimeresurus albolabris (White-lipped pit viper) protein is Alpha-fibrinogenase albofibrase.